The sequence spans 211 residues: Fucoxanthin-chlorophyll a-c binding protein F, chloroplastic (211 aa).

Residues 1-33 constitute a chloroplast transit peptide; sequence AIACAAAPGLRGPSAFNGAALSTPAKSSSAMKM. 3 helical membrane-spanning segments follow: residues 75 to 95, 116 to 136, and 177 to 197; these read IAML…PGML, IPPG…LAVM, and GRAA…SNQP.

This sequence belongs to the fucoxanthin chlorophyll protein family. As to quaternary structure, the LHC complex of chromophytic algae is composed of fucoxanthin, chlorophyll A and C bound non-covalently by fucoxanthin chlorophyll proteins (FCPs). The ratio of pigments in this LHC is; fucoxanthin: chlorophyll C: chlorophyll A; (0.6-1): (0.1-0.3): (1).

Its subcellular location is the plastid. It localises to the chloroplast thylakoid membrane. Functionally, the light-harvesting complex (LHC) functions as a light receptor, it captures and delivers excitation energy to photosystems with which it is closely associated. Energy is transferred from the carotenoid and chlorophyll C (or B) to chlorophyll A and the photosynthetic reaction centers where it is used to synthesize ATP and reducing power. The sequence is that of Fucoxanthin-chlorophyll a-c binding protein F, chloroplastic (FCPF) from Macrocystis pyrifera (Giant kelp).